Here is a 273-residue protein sequence, read N- to C-terminus: Major prion protein homolog (273 aa).

A signal peptide spans 1–24 (MARLLTTCCLLALLLAACTDVALS). Positions 25-121 (KKGKGKPSGG…QKPWKPPKTN (97 aa)) are disordered. Tandem repeats lie at residues 42–47 (RQPSYP), 48–53 (RQPGYP), 54–59 (HNPGYP), 60–65 (HNPGYP), 66–71 (HNPGYP), 72–77 (HNPGYP), 78–83 (HNPGYP), and 84–89 (QNPGYP). The 8 X 6 AA tandem repeats of [HR]-[NQ]-P-G-Y-P stretch occupies residues 42-89 (RQPSYPRQPGYPHNPGYPHNPGYPHNPGYPHNPGYPHNPGYPQNPGYP). Residues 51–94 (GYPHNPGYPHNPGYPHNPGYPHNPGYPHNPGYPQNPGYPHNPGY) are compositionally biased toward low complexity. Positions 66, 72, and 78 each coordinate Cu(2+). Positions 90 and 93 each coordinate Cu(2+). The span at 101–111 (YNPSSGGSYHN) shows a compositional bias: polar residues. Cysteine 192 and cysteine 237 are disulfide-bonded. Residues asparagine 194, asparagine 209, and asparagine 218 are each glycosylated (N-linked (GlcNAc...) asparagine). Residue serine 248 is the site of GPI-anchor amidated serine attachment. Positions 249–273 (GIQLHPADTWLAVLLLLLTTLFAMH) are cleaved as a propeptide — removed in mature form.

It belongs to the prion family. Monomer and homodimer. Has a tendency to aggregate into amyloid fibrils containing a cross-beta spine, formed by a steric zipper of superposed beta-strands. Soluble oligomers may represent an intermediate stage on the path to fibril formation. Copper binding may promote oligomerization. In terms of tissue distribution, spinal cord and brain.

The protein resides in the cell membrane. Its function is as follows. Its primary physiological function is unclear. Has cytoprotective activity against internal or environmental stresses. May play a role in neuronal development and synaptic plasticity. May be required for neuronal myelin sheath maintenance. May play a role in iron uptake and iron homeostasis. Soluble oligomers are toxic to cultured neuroblastoma cells and induce apoptosis (in vitro). Association with GPC1 (via its heparan sulfate chains) targets PRNP to lipid rafts. Also provides Cu(2+) or Zn(2+) for the ascorbate-mediated GPC1 deaminase degradation of its heparan sulfate side chains. The polypeptide is Major prion protein homolog (PRNP) (Gallus gallus (Chicken)).